The sequence spans 213 residues: Ribosomal RNA small subunit methyltransferase G (213 aa).

S-adenosyl-L-methionine-binding positions include G77, F82, 130 to 131, and R146; that span reads IE.

This sequence belongs to the methyltransferase superfamily. RNA methyltransferase RsmG family.

The protein localises to the cytoplasm. The catalysed reaction is guanosine(527) in 16S rRNA + S-adenosyl-L-methionine = N(7)-methylguanosine(527) in 16S rRNA + S-adenosyl-L-homocysteine. Specifically methylates the N7 position of guanine in position 527 of 16S rRNA. This chain is Ribosomal RNA small subunit methyltransferase G, found in Bartonella tribocorum (strain CIP 105476 / IBS 506).